An 876-amino-acid polypeptide reads, in one-letter code: Leucine--tRNA ligase (876 aa).

Positions 43 to 53 match the 'HIGH' region motif; sequence PYPSGRIHMGH. The 'KMSKS' region signature appears at 632–636; sequence KMSKS. ATP is bound at residue lysine 635.

The protein belongs to the class-I aminoacyl-tRNA synthetase family.

The protein localises to the cytoplasm. The enzyme catalyses tRNA(Leu) + L-leucine + ATP = L-leucyl-tRNA(Leu) + AMP + diphosphate. The sequence is that of Leucine--tRNA ligase from Rhizobium etli (strain CIAT 652).